The primary structure comprises 303 residues: Bifunctional protein FolD (303 aa).

NADP(+) contacts are provided by residues 165 to 167 (GRS), Ser-190, and Ile-231.

It belongs to the tetrahydrofolate dehydrogenase/cyclohydrolase family. Homodimer.

It carries out the reaction (6R)-5,10-methylene-5,6,7,8-tetrahydrofolate + NADP(+) = (6R)-5,10-methenyltetrahydrofolate + NADPH. The catalysed reaction is (6R)-5,10-methenyltetrahydrofolate + H2O = (6R)-10-formyltetrahydrofolate + H(+). It functions in the pathway one-carbon metabolism; tetrahydrofolate interconversion. Catalyzes the oxidation of 5,10-methylenetetrahydrofolate to 5,10-methenyltetrahydrofolate and then the hydrolysis of 5,10-methenyltetrahydrofolate to 10-formyltetrahydrofolate. This chain is Bifunctional protein FolD, found in Prochlorococcus marinus (strain NATL1A).